We begin with the raw amino-acid sequence, 784 residues long: Protein Skeletor, isoforms B/C (784 aa).

The first 28 residues, 1–28 (MLAMKDKPWLLLFGLLAALSCLASFGDA), serve as a signal peptide directing secretion. DM13 domains lie at 34-143 (GTKI…VSIP) and 151-258 (PQKI…VRLP). Positions 287–419 (LAFEVRWAVA…GAESVVWAIG (133 aa)) constitute a DOMON domain. The interval 451-491 (PLPEGARGNSNSSEQEDSAPAAQSSTGGAGYPPAGRPNVEP) is disordered.

As to quaternary structure, interacts with Chro and Mgtor as part of a macromolecular complex forming the spindle matrix. Chro colocalizes with Skeletor (Skel) on the chromosomes at interphase and on spindle during metaphase.

Its subcellular location is the cytoplasm. The protein resides in the cytoskeleton. It localises to the spindle. The protein localises to the nucleus. It is found in the nucleolus. Its subcellular location is the chromosome. Provides structural support to stabilize and organize the microtubule spindle during mitosis (within embryonic somatic cells) and meiosis (within spermatocytes). The role in mitosis regulation depends on the Ran pathway. In Drosophila melanogaster (Fruit fly), this protein is Protein Skeletor, isoforms B/C.